A 162-amino-acid polypeptide reads, in one-letter code: ATP synthase subunit b 1 (162 aa).

Residues 1–21 (MLLTAEFWVAVAFVAFLVIVW) form a helical membrane-spanning segment.

This sequence belongs to the ATPase B chain family. F-type ATPases have 2 components, F(1) - the catalytic core - and F(0) - the membrane proton channel. F(1) has five subunits: alpha(3), beta(3), gamma(1), delta(1), epsilon(1). F(0) has three main subunits: a(1), b(2) and c(10-14). The alpha and beta chains form an alternating ring which encloses part of the gamma chain. F(1) is attached to F(0) by a central stalk formed by the gamma and epsilon chains, while a peripheral stalk is formed by the delta and b chains.

The protein resides in the cell inner membrane. F(1)F(0) ATP synthase produces ATP from ADP in the presence of a proton or sodium gradient. F-type ATPases consist of two structural domains, F(1) containing the extramembraneous catalytic core and F(0) containing the membrane proton channel, linked together by a central stalk and a peripheral stalk. During catalysis, ATP synthesis in the catalytic domain of F(1) is coupled via a rotary mechanism of the central stalk subunits to proton translocation. In terms of biological role, component of the F(0) channel, it forms part of the peripheral stalk, linking F(1) to F(0). In Methylorubrum populi (strain ATCC BAA-705 / NCIMB 13946 / BJ001) (Methylobacterium populi), this protein is ATP synthase subunit b 1.